Here is a 153-residue protein sequence, read N- to C-terminus: Sec-independent protein translocase protein TatB (153 aa).

The chain crosses the membrane as a helical span at residues 1-21; sequence MFGISFSELLLVGLVALLVLG. A disordered region spans residues 78–153; the sequence is MFAQNQHPET…HDSSLPPRAP (76 aa).

The protein belongs to the TatB family. The Tat system comprises two distinct complexes: a TatABC complex, containing multiple copies of TatA, TatB and TatC subunits, and a separate TatA complex, containing only TatA subunits. Substrates initially bind to the TatABC complex, which probably triggers association of the separate TatA complex to form the active translocon.

The protein localises to the cell inner membrane. Part of the twin-arginine translocation (Tat) system that transports large folded proteins containing a characteristic twin-arginine motif in their signal peptide across membranes. Together with TatC, TatB is part of a receptor directly interacting with Tat signal peptides. TatB may form an oligomeric binding site that transiently accommodates folded Tat precursor proteins before their translocation. The sequence is that of Sec-independent protein translocase protein TatB from Pseudomonas savastanoi pv. phaseolicola (strain 1448A / Race 6) (Pseudomonas syringae pv. phaseolicola (strain 1448A / Race 6)).